Here is a 231-residue protein sequence, read N- to C-terminus: NADH-ubiquinone oxidoreductase chain 4 (231 aa).

7 consecutive transmembrane segments (helical) span residues 1–21, 34–54, 63–85, 89–111, 128–148, 169–189, and 211–231; these read PIAG…YGII, VFLP…LTCL, IAYS…TPWG, AMAL…NTTY, MMPM…AIPP, TIIM…HMFL, and LLMT…ELVT.

This sequence belongs to the complex I subunit 4 family.

Its subcellular location is the mitochondrion membrane. It carries out the reaction a ubiquinone + NADH + 5 H(+)(in) = a ubiquinol + NAD(+) + 4 H(+)(out). In terms of biological role, core subunit of the mitochondrial membrane respiratory chain NADH dehydrogenase (Complex I) that is believed to belong to the minimal assembly required for catalysis. Complex I functions in the transfer of electrons from NADH to the respiratory chain. The immediate electron acceptor for the enzyme is believed to be ubiquinone. This chain is NADH-ubiquinone oxidoreductase chain 4 (MT-ND4), found in Sistrurus miliarius (Pigmy rattlesnake).